The primary structure comprises 448 residues: Hydroxycinnamoyl-CoA:piscidic acid hydroxycinnamoyltransferase (448 aa).

Active-site proton acceptor residues include His-153 and Asp-395.

It belongs to the plant acyltransferase family. In terms of tissue distribution, highly expressed in root and rhizome. Expressed in senescent leaf and callus tissues. Expressed in detached leaf treated for 18 hours with ethephon, methyl jasmonate, salicylic acid or illuminated for 24 hours with UV light. Not expressed in mature leaf. Expressed at low levels in leaves and flowers.

It carries out the reaction (2R,3S)-piscidate + (E)-4-coumaroyl-CoA = cimicifugate K + CoA. The enzyme catalyses (2R,3S)-piscidate + (E)-caffeoyl-CoA = cimicifugate D + CoA. The catalysed reaction is (2R,3S)-piscidate + (E)-sinapoyl-CoA = cimicifugate J + CoA. It catalyses the reaction (2R,3S)-piscidate + (E)-feruloyl-CoA = cimicifugate E + CoA. It functions in the pathway phenylpropanoid metabolism. Its function is as follows. Catalyzes the formation of cimicifugic acids. Uses hydroxycinnamoyl-CoA thioesters as hydroxycinnamoyl donor substrates. Has a strict specificity for piscidic acid as an acceptor substrate as none of the various other acceptors tested including 4-hydroxyphenyllactic acid, malate, spermidine or tetrahydroxyhexanedioic acid are substrates. Donor substrates include 4-coumaroyl-CoA, caffeoyl-CoA, sinapoyl-CoA and feruloyl-CoA. No activity with cinnamoyl-CoA, isoferuloyl-CoA, 3,4-dimethoxycinnamoyl-CoA or 3,4-dihydroxybenzoyl-CoA as donors. In the reverse reaction with fukinolic acid and CoA as substrates, a formation of fukiic acid is evident. Hence, fukiic acid may also serve as an acceptor substrate. Involved in the biosynthesis of cimicifugic and possibly fukinolic acids. The protein is Hydroxycinnamoyl-CoA:piscidic acid hydroxycinnamoyltransferase of Actaea racemosa (Black cohosh).